The chain runs to 422 residues: Probable zinc-type alcohol dehydrogenase-like protein L498 (422 aa).

Residues Cys-108, His-129, Cys-160, Cys-163, Cys-166, Cys-174, and Cys-231 each contribute to the Zn(2+) site.

Requires Zn(2+) as cofactor.

It localises to the host cytoplasm. The protein localises to the virion. The sequence is that of Probable zinc-type alcohol dehydrogenase-like protein L498 from Acanthamoeba polyphaga (Amoeba).